The primary structure comprises 835 residues: MRWSFLTVLLWLVSLTGAENGFNGWLRYAPVQCDKRCQRALPSSIVTLNSTDSGPIGTASQELQAGLENIVGKQLSIKRSSCGSRSSILVATLEQYRQACNRSSEVPSLGIDGFWLRAYGDTVQIVGENERGALYGAFEYLSLLAQGNFSHVDYTTSAHAPVRWVNQWDNMDGSIERGYAGPSIFFEDGHIVEDLSRVKQYARLLASIRINGVIVNNVNANATLLTSQNMDGLARIANVFRPYGIQIGISLNFASPDTLGGLGTYDPLDPSVISWWANITDSLYDRVPDMAGYLVKASSEGQPGPDTYNRTLAEGANVFAKALQPHGGILMFRTFVYDHHINESIWTNDRANAQVDFFKELDGQFEDNIKYGPIDFQVREPVSPLFANLYKTNMAIELQVTQEYLGQQDHLVYLSPLWKELLDFDLRVDHQPSLVRDIVSGQRFDRQLGGWAAVVNVGTNTTWLGSHLAMSNLYAYGRLAWSPTDDSQGILQDWIRLTFGRDQNVLDAITDMSMASWPAYENYTGNLGIQTLTDILYTHYGPNPASQDNNGWGQWTRADHDTIGMDRTVKNGTGNAGQYPAEIAQVYEDLDSTPDDLLLWFHHVPYTHRLHSGKTVIQHFYDAHYDGAETAHRFLSQWESLKGRIDQQRYNEVLSRLVYQAGHSLVWRDAINNFYWNMSGISDEKNRLGHHPWRVEAESMTLDGYEPYTVSPFETASNYKAVVTTSNSTTGTAQTKLQFPSGTYDLGVNYYDMYGGKSEWTVYVNDRVVGQWEGNSENTLGHTPSIYIDGHSATRITFRGVEIENGDQLKIVGVPDGVEPAPLDYVVLLPPDVVD.

A signal peptide spans Met-1–Ala-18. Residues Asn-49, Asn-101, Asn-148, Asn-221, Asn-278, Asn-309, Asn-342, Asn-460, Asn-522, Asn-571, Asn-677, and Asn-727 are each glycosylated (N-linked (GlcNAc...) asparagine).

Belongs to the glycosyl hydrolase 67 family.

It is found in the secreted. It carries out the reaction an alpha-D-glucuronoside + H2O = D-glucuronate + an alcohol. Alpha-glucuronidase involved in the hydrolysis of xylan, a major structural heterogeneous polysaccharide found in plant biomass representing the second most abundant polysaccharide in the biosphere, after cellulose. Releases 4-O-methylglucuronic acid from xylan. This is Probable alpha-glucuronidase A (aguA) from Aspergillus oryzae (strain ATCC 42149 / RIB 40) (Yellow koji mold).